The following is a 111-amino-acid chain: Probable 4-amino-4-deoxy-L-arabinose-phosphoundecaprenol flippase subunit ArnE (111 aa).

At 1–35 (MIWLTLVFASLLSVAGQLCQKQATCFAAVNKRRKH) the chain is on the cytoplasmic side. Residues 36–56 (IVLWLGLALACLGLAMVLWLL) traverse the membrane as a helical segment. Residues 40 to 109 (LGLALACLGL…IIGGIVILGS (70 aa)) enclose the EamA domain. Over 57 to 60 (VLQN) the chain is Periplasmic. A helical membrane pass occupies residues 61–81 (VPVGIAYPMLSLNFVWVTLAA). Over 82 to 87 (VKLWHE) the chain is Cytoplasmic. A helical transmembrane segment spans residues 88–108 (PVSLRHWCGLAFIIGGIVILG). Residues 109–111 (STV) are Periplasmic-facing.

Belongs to the ArnE family. In terms of assembly, heterodimer of ArnE and ArnF.

Its subcellular location is the cell inner membrane. The protein operates within bacterial outer membrane biogenesis; lipopolysaccharide biosynthesis. Functionally, translocates 4-amino-4-deoxy-L-arabinose-phosphoundecaprenol (alpha-L-Ara4N-phosphoundecaprenol) from the cytoplasmic to the periplasmic side of the inner membrane. In Escherichia coli O81 (strain ED1a), this protein is Probable 4-amino-4-deoxy-L-arabinose-phosphoundecaprenol flippase subunit ArnE.